The following is a 344-amino-acid chain: Serine/threonine-protein kinase ppk13 (344 aa).

Residues 38–46 (LGEGGFAFV) and K61 contribute to the ATP site. In terms of domain architecture, Protein kinase spans 76-344 (MKEADYHRKF…LSKIDLQINQ (269 aa)). H192 functions as the Proton acceptor in the catalytic mechanism.

It belongs to the protein kinase superfamily. Ser/Thr protein kinase family.

The protein resides in the endoplasmic reticulum. Its subcellular location is the golgi apparatus. The enzyme catalyses L-seryl-[protein] + ATP = O-phospho-L-seryl-[protein] + ADP + H(+). The catalysed reaction is L-threonyl-[protein] + ATP = O-phospho-L-threonyl-[protein] + ADP + H(+). The polypeptide is Serine/threonine-protein kinase ppk13 (ppk13) (Schizosaccharomyces pombe (strain 972 / ATCC 24843) (Fission yeast)).